The following is a 308-amino-acid chain: GTP cyclohydrolase FolE2 (308 aa).

Belongs to the GTP cyclohydrolase IV family.

The enzyme catalyses GTP + H2O = 7,8-dihydroneopterin 3'-triphosphate + formate + H(+). Its pathway is cofactor biosynthesis; 7,8-dihydroneopterin triphosphate biosynthesis; 7,8-dihydroneopterin triphosphate from GTP: step 1/1. Functionally, converts GTP to 7,8-dihydroneopterin triphosphate. This chain is GTP cyclohydrolase FolE2, found in Colwellia psychrerythraea (strain 34H / ATCC BAA-681) (Vibrio psychroerythus).